Reading from the N-terminus, the 221-residue chain is Large ribosomal subunit protein uL3 (221 aa).

Belongs to the universal ribosomal protein uL3 family. Part of the 50S ribosomal subunit. Forms a cluster with proteins L14 and L19.

One of the primary rRNA binding proteins, it binds directly near the 3'-end of the 23S rRNA, where it nucleates assembly of the 50S subunit. The polypeptide is Large ribosomal subunit protein uL3 (Chlamydia trachomatis serovar L2 (strain ATCC VR-902B / DSM 19102 / 434/Bu)).